A 125-amino-acid polypeptide reads, in one-letter code: Fluoride-specific ion channel FluC (125 aa).

The next 4 helical transmembrane spans lie at 4–24, 32–52, 67–87, and 100–120; these read LMLV…TVTA, AFPW…GLLV, LLLA…SLDV, and LAYV…GLWL. Na(+) contacts are provided by G75 and T78.

This sequence belongs to the fluoride channel Fluc/FEX (TC 1.A.43) family.

It localises to the cell inner membrane. The catalysed reaction is fluoride(in) = fluoride(out). With respect to regulation, na(+) is not transported, but it plays an essential structural role and its presence is essential for fluoride channel function. Functionally, fluoride-specific ion channel. Important for reducing fluoride concentration in the cell, thus reducing its toxicity. The sequence is that of Fluoride-specific ion channel FluC from Chelativorans sp. (strain BNC1).